Here is a 58-residue protein sequence, read N- to C-terminus: Large ribosomal subunit protein uL30 (58 aa).

Belongs to the universal ribosomal protein uL30 family. Part of the 50S ribosomal subunit.

In Buchnera aphidicola subsp. Baizongia pistaciae (strain Bp), this protein is Large ribosomal subunit protein uL30.